A 143-amino-acid polypeptide reads, in one-letter code: Type II secretion system core protein G (143 aa).

A propeptide spans 1-8 (leader sequence); sequence MQKRRQSG. The residue at position 9 (F9) is an N-methylphenylalanine. Residues 9 to 29 traverse the membrane as a helical segment; sequence FTLLEVMVVIVILGILASLVV. Residues 70–92 are disordered; sequence QGLDALVNKPTAAPEPRSYRDGG.

Belongs to the GSP G family. Type II secretion system is composed of four main components: the outer membrane complex, the inner membrane complex, the cytoplasmic secretion ATPase and the periplasm-spanning pseudopilus. Forms homomultimers. In terms of processing, cleaved by the prepilin peptidase. Methylated by prepilin peptidase at the amino group of the N-terminal phenylalanine once the leader sequence is cleaved.

It is found in the cell inner membrane. Its function is as follows. Core component of the type II secretion system required for the energy-dependent secretion of extracellular factors such as proteases and toxins from the periplasm. Pseudopilin (pilin-like) protein that polymerizes to form the pseudopilus. Further polymerization triggers pseudopilus growth. In Aeromonas hydrophila, this protein is Type II secretion system core protein G (exeG).